The following is a 210-amino-acid chain: Urease accessory protein UreF (210 aa).

It belongs to the UreF family. In terms of assembly, ureD, UreF and UreG form a complex that acts as a GTP-hydrolysis-dependent molecular chaperone, activating the urease apoprotein by helping to assemble the nickel containing metallocenter of UreC. The UreE protein probably delivers the nickel.

The protein localises to the cytoplasm. Functionally, required for maturation of urease via the functional incorporation of the urease nickel metallocenter. In Cereibacter sphaeroides (strain ATCC 17025 / ATH 2.4.3) (Rhodobacter sphaeroides), this protein is Urease accessory protein UreF.